We begin with the raw amino-acid sequence, 148 residues long: Lipoprotein MlpA (148 aa).

An N-terminal signal peptide occupies residues 1-17; the sequence is MKIINILFCLFLLLLNS. The N-palmitoyl cysteine moiety is linked to residue C18. The S-diacylglycerol cysteine moiety is linked to residue C18. Residues 26–58 are disordered; that stretch reads LKNNAQQTKSRGKRDLTQKEATPEKPKSKEELL. Residues 38–58 show a composition bias toward basic and acidic residues; that stretch reads KRDLTQKEATPEKPKSKEELL.

This sequence belongs to the Multicopy lipoprotein (Mlp) family.

It is found in the cell outer membrane. An outer membrane protein that may participate in pathogenesis. Some human Lyme disease patients have antibodies against this protein. The Mlp proteins probably undergo intragenic recombination, generating new alleles. The polypeptide is Lipoprotein MlpA (mlpA) (Borreliella burgdorferi (strain ATCC 35210 / DSM 4680 / CIP 102532 / B31) (Borrelia burgdorferi)).